We begin with the raw amino-acid sequence, 497 residues long: MDVPGPVSRRAAAAAATVLLRTARVRRECWFLPTALLCAYGFFASLRPSEPFLTPYLLGPDKNLTEREVFNEIYPVWTYSYLVLLFPVFLATDYLRYKPVVLLQGLSLIVTWFMLLYAQGLLAIQFLEFFYGIATATEIAYYSYIYSVVDLGMYQKVTSYCRSATLVGFTVGSVLGQILVSVAGWSLFSLNVISLTCVSVAFAVAWFLPMPQKSLFFHHIPSTCQRVNGIKVQNGGIVTDTPASNHLPGWEDIESKIPLNMEEPPVEEPEPKPDRLLVLKVLWNDFLMCYSSRPLLCWSVWWALSTCGYFQVVNYTQGLWEKVMPSRYAAIYNGGVEAVSTLLGAVAVFAVGYIKISWSTWGEMTLSLFSLLIAAAVYIMDTVGNIWVCYASYVVFRIIYMLLITIATFQIAANLSMERYALVFGVNTFIALALQTLLTLIVVDASGLGLEITTQFLIYASYFALIAVVFLASGAVSVMKKCRKLEDPQSSSQVTTS.

Position 1 is an N-acetylmethionine (Met-1). The Cytoplasmic segment spans residues 1 to 28 (MDVPGPVSRRAAAAAATVLLRTARVRRE). A helical transmembrane segment spans residues 29–46 (CWFLPTALLCAYGFFASL). Topologically, residues 47 to 72 (RPSEPFLTPYLLGPDKNLTEREVFNE) are extracellular. The N-linked (GlcNAc...) asparagine glycan is linked to Asn-63. The chain crosses the membrane as a helical span at residues 73-91 (IYPVWTYSYLVLLFPVFLA). Over 92–99 (TDYLRYKP) the chain is Cytoplasmic. A helical membrane pass occupies residues 100–118 (VVLLQGLSLIVTWFMLLYA). The Extracellular segment spans residues 119–128 (QGLLAIQFLE). Residues 129-149 (FFYGIATATEIAYYSYIYSVV) form a helical membrane-spanning segment. The Cytoplasmic segment spans residues 150–165 (DLGMYQKVTSYCRSAT). A helical membrane pass occupies residues 166-185 (LVGFTVGSVLGQILVSVAGW). Residues 186-191 (SLFSLN) lie on the Extracellular side of the membrane. The helical transmembrane segment at 192–208 (VISLTCVSVAFAVAWFL) threads the bilayer. Residues 209-285 (PMPQKSLFFH…LLVLKVLWND (77 aa)) lie on the Cytoplasmic side of the membrane. Position 222 is a phosphoserine (Ser-222). A helical membrane pass occupies residues 286–310 (FLMCYSSRPLLCWSVWWALSTCGYF). Residues 311–337 (QVVNYTQGLWEKVMPSRYAAIYNGGVE) are Extracellular-facing. An N-linked (GlcNAc...) asparagine glycan is attached at Asn-314. The helical transmembrane segment at 338-354 (AVSTLLGAVAVFAVGYI) threads the bilayer. At 355-363 (KISWSTWGE) the chain is on the cytoplasmic side. The helical transmembrane segment at 364–380 (MTLSLFSLLIAAAVYIM) threads the bilayer. The Extracellular segment spans residues 381 to 386 (DTVGNI). Residues 387–409 (WVCYASYVVFRIIYMLLITIATF) form a helical membrane-spanning segment. Residues 410–419 (QIAANLSMER) are Cytoplasmic-facing. A helical membrane pass occupies residues 420–443 (YALVFGVNTFIALALQTLLTLIVV). The Extracellular portion of the chain corresponds to 444–455 (DASGLGLEITTQ). A helical membrane pass occupies residues 456-479 (FLIYASYFALIAVVFLASGAVSVM). Topologically, residues 480–497 (KKCRKLEDPQSSSQVTTS) are cytoplasmic.

It belongs to the reduced folate carrier (RFC) transporter (TC 2.A.48) family. As to quaternary structure, interacts with TSPAN1; this interaction increases the stability of SLC19A2. Interacts with TMEM63B. Ubiquitous; most abundant in skeletal and cardiac muscle. Medium expression in placenta, heart, liver and kidney, low in lung.

Its subcellular location is the cell membrane. The enzyme catalyses thiamine(out) + H(+)(in) = thiamine(in) + H(+)(out). It carries out the reaction pyridoxine(out) + n H(+)(out) = pyridoxine(in) + n H(+)(in). With respect to regulation, pyridoxine transport is inhibited by carbonyl cyanide p-trifluoromethoxyphenylhydrazone (FCCP) and carbonyl cyanide m-chlorophenylhydrazone (CCCP). Its function is as follows. High-affinity transporter for the intake of thiamine. Mediates H(+)-dependent pyridoxine transport. The polypeptide is Thiamine transporter 1 (SLC19A2) (Homo sapiens (Human)).